The chain runs to 129 residues: Fluoride-specific ion channel FluC (129 aa).

4 consecutive transmembrane segments (helical) span residues leucine 4 to isoleucine 24, phenylalanine 32 to threonine 52, phenylalanine 69 to leucine 89, and valine 105 to isoleucine 125. Positions 76 and 79 each coordinate Na(+).

The protein belongs to the fluoride channel Fluc/FEX (TC 1.A.43) family.

The protein resides in the cell inner membrane. The catalysed reaction is fluoride(in) = fluoride(out). Its activity is regulated as follows. Na(+) is not transported, but it plays an essential structural role and its presence is essential for fluoride channel function. Its function is as follows. Fluoride-specific ion channel. Important for reducing fluoride concentration in the cell, thus reducing its toxicity. The chain is Fluoride-specific ion channel FluC from Rhodospirillum rubrum (strain ATCC 11170 / ATH 1.1.1 / DSM 467 / LMG 4362 / NCIMB 8255 / S1).